Reading from the N-terminus, the 883-residue chain is Collagen, type I, alpha 1b (883 aa).

The tract at residues 1 to 883 is disordered; sequence QMSYVDHSKS…LGGSNDVELR (883 aa). Residues 13–33 are compositionally biased toward pro residues; it reads PPQPGPMGPMGPRGPPGPPGS. Low complexity-rich tracts occupy residues 34–57, 113–122, and 129–140; these read SGPQ…AMGS, VPGVMGARGR, and SGARGNDGNTGP. 2 stretches are compositionally biased toward gly residues: residues 147 to 161 and 185 to 194; these read TGGE…GNEG and GTDGGPGAKG. Composition is skewed to low complexity over residues 195 to 205, 214 to 223, and 230 to 248; these read SPGAAGLAGAP, AQGAVGAPGP, and PGAS…PGPA. Residues 285–297 are compositionally biased toward gly residues; it reads GADGGAGGKGAPG. Composition is skewed to low complexity over residues 310–326 and 390–402; these read ATGE…PGSK and VGAP…AGPA. Residues 415 to 424 are compositionally biased toward gly residues; the sequence is GAPGLGGPTG. Over residues 425-444 the composition is skewed to low complexity; that stretch reads ARGAPGPAGNDGAKGEPGAA. Gly residues-rich tracts occupy residues 445–454 and 478–487; these read GAPGGLGAPG and GGKGGDGAPG. Low complexity predominate over residues 512 to 542; sequence AGPTGPRGETGPPGPAGFAGPPGADGQPGAK. The span at 564-573 shows a compositional bias: gly residues; that stretch reads GPKGGAGPPG. 3 stretches are compositionally biased toward low complexity: residues 574 to 584, 717 to 726, and 742 to 756; these read ATGFPGPAGRV, APGAVGPSGK, and SGPA…PAGA. Residues 757–771 show a composition bias toward basic and acidic residues; that stretch reads KGDRGEAGEAGDRGH. Positions 792–812 are enriched in low complexity; that stretch reads PAGASGPAGPRGPAGSNGAPG. Residues 821-836 show a composition bias toward pro residues; the sequence is AGPPGPPGPAGPPGPP.

The protein belongs to the fibrillar collagen family.

This chain is Collagen, type I, alpha 1b, found in Epinephelus costae (Goldblotch grouper).